The sequence spans 409 residues: Pentatricopeptide repeat-containing protein At1g01970 (409 aa).

PPR repeat units lie at residues 164 to 198, 199 to 233, 234 to 268, 269 to 303, 304 to 338, and 339 to 373; these read NARD…GFLI, DQVT…GEPL, DYRS…EICA, GREV…GITP, DVKL…GIKA, and TDKC…SIML.

The protein belongs to the PPR family. P subfamily.

This chain is Pentatricopeptide repeat-containing protein At1g01970, found in Arabidopsis thaliana (Mouse-ear cress).